The following is a 336-amino-acid chain: Tryptophan--tRNA ligase (336 aa).

Residues 16-18 (QPT) and 24-25 (GN) contribute to the ATP site. Residues 17–25 (PTGQLHLGN) carry the 'HIGH' region motif. Residue Asp-140 coordinates L-tryptophan. ATP-binding positions include 152–154 (GED), Val-191, and 200–204 (KMSKS). The 'KMSKS' region signature appears at 200–204 (KMSKS).

This sequence belongs to the class-I aminoacyl-tRNA synthetase family. In terms of assembly, homodimer.

Its subcellular location is the cytoplasm. It catalyses the reaction tRNA(Trp) + L-tryptophan + ATP = L-tryptophyl-tRNA(Trp) + AMP + diphosphate + H(+). Catalyzes the attachment of tryptophan to tRNA(Trp). The polypeptide is Tryptophan--tRNA ligase (Gloeobacter violaceus (strain ATCC 29082 / PCC 7421)).